The chain runs to 280 residues: 4-deoxy-L-threo-5-hexosulose-uronate ketol-isomerase (280 aa).

4 residues coordinate Zn(2+): His198, His200, Glu205, and His247.

Belongs to the KduI family. Zn(2+) is required as a cofactor.

It is found in the cytoplasm. It carries out the reaction 5-dehydro-4-deoxy-D-glucuronate = 3-deoxy-D-glycero-2,5-hexodiulosonate. Its function is as follows. Isomerase involved in ulvan degradation. Ulvan is the main polysaccharide component of the Ulvales (green seaweed) cell wall. It is composed of disaccharide building blocks comprising 3-sulfated rhamnose (Rha3S) linked to D-glucuronic acid (GlcA), L-iduronic acid (IduA), or D-xylose (Xyl). Catalyzes the isomerization of 5-dehydro-4-deoxy-D-glucuronate to 3-deoxy-D-glycero-2,5-hexodiulosonate. This chain is 4-deoxy-L-threo-5-hexosulose-uronate ketol-isomerase, found in Formosa agariphila (strain DSM 15362 / KCTC 12365 / LMG 23005 / KMM 3901 / M-2Alg 35-1).